A 230-amino-acid polypeptide reads, in one-letter code: Probable methylthioribulose-1-phosphate dehydratase (230 aa).

Cys-87 provides a ligand contact to substrate. His-105 and His-107 together coordinate Zn(2+). The active-site Proton donor/acceptor is the Glu-129. A Zn(2+)-binding site is contributed by His-185.

This sequence belongs to the aldolase class II family. MtnB subfamily. The cofactor is Zn(2+).

The protein localises to the cytoplasm. It catalyses the reaction 5-(methylsulfanyl)-D-ribulose 1-phosphate = 5-methylsulfanyl-2,3-dioxopentyl phosphate + H2O. It functions in the pathway amino-acid biosynthesis; L-methionine biosynthesis via salvage pathway; L-methionine from S-methyl-5-thio-alpha-D-ribose 1-phosphate: step 2/6. Catalyzes the dehydration of methylthioribulose-1-phosphate (MTRu-1-P) into 2,3-diketo-5-methylthiopentyl-1-phosphate (DK-MTP-1-P). In Drosophila virilis (Fruit fly), this protein is Probable methylthioribulose-1-phosphate dehydratase.